Consider the following 71-residue polypeptide: Putative membrane protein insertion efficiency factor (71 aa).

The protein belongs to the UPF0161 family.

It localises to the cell membrane. Could be involved in insertion of integral membrane proteins into the membrane. The polypeptide is Putative membrane protein insertion efficiency factor (Desulforudis audaxviator (strain MP104C)).